Reading from the N-terminus, the 394-residue chain is ATP phosphoribosyltransferase regulatory subunit (394 aa).

It belongs to the class-II aminoacyl-tRNA synthetase family. HisZ subfamily. As to quaternary structure, heteromultimer composed of HisG and HisZ subunits.

It localises to the cytoplasm. Its pathway is amino-acid biosynthesis; L-histidine biosynthesis; L-histidine from 5-phospho-alpha-D-ribose 1-diphosphate: step 1/9. Functionally, required for the first step of histidine biosynthesis. May allow the feedback regulation of ATP phosphoribosyltransferase activity by histidine. The chain is ATP phosphoribosyltransferase regulatory subunit from Geobacillus thermodenitrificans (strain NG80-2).